The following is a 121-amino-acid chain: uncharacterized protein (121 aa).

The segment at 101 to 121 (TVVKKEDVRESPVDTFMENAT) is disordered. The span at 102 to 112 (VVKKEDVRESP) shows a compositional bias: basic and acidic residues.

This is an uncharacterized protein from Schizosaccharomyces pombe (strain 972 / ATCC 24843) (Fission yeast).